The sequence spans 270 residues: Phosphatidate cytidylyltransferase (270 aa).

Helical transmembrane passes span F17–I37, F55–P75, I81–F101, V104–I124, G129–F149, E170–V190, L193–I213, and I248–V268.

Belongs to the CDS family.

It localises to the cell membrane. It carries out the reaction a 1,2-diacyl-sn-glycero-3-phosphate + CTP + H(+) = a CDP-1,2-diacyl-sn-glycerol + diphosphate. The protein operates within phospholipid metabolism; CDP-diacylglycerol biosynthesis; CDP-diacylglycerol from sn-glycerol 3-phosphate: step 3/3. The polypeptide is Phosphatidate cytidylyltransferase (cdsA) (Thermotoga maritima (strain ATCC 43589 / DSM 3109 / JCM 10099 / NBRC 100826 / MSB8)).